We begin with the raw amino-acid sequence, 157 residues long: MSRKNKKIKKKVFVDTRYNSRIVAKFANRMMYDGKKSISESILYSSIDLLADKLEESDKMAVFYKALDNIKPLVEVRSRRVGGATYQVPVEVREERREALAMKWIIFAARKSSGRSMKEKLSNELLNAYNSTGAAFKKKEDTHRMAEANKAFTHYRW.

The protein belongs to the universal ribosomal protein uS7 family. As to quaternary structure, part of the 30S ribosomal subunit. Contacts proteins S9 and S11.

Its function is as follows. One of the primary rRNA binding proteins, it binds directly to 16S rRNA where it nucleates assembly of the head domain of the 30S subunit. Is located at the subunit interface close to the decoding center, probably blocks exit of the E-site tRNA. This Borreliella burgdorferi (strain ATCC 35210 / DSM 4680 / CIP 102532 / B31) (Borrelia burgdorferi) protein is Small ribosomal subunit protein uS7.